The sequence spans 383 residues: Chaperone protein DnaJ (383 aa).

The J domain occupies 5–70 (DYYDVLGVSK…DKKAAYDRYG (66 aa)). The segment at 142 to 220 (GMQKTISVPG…CRGAGREEKT (79 aa)) adopts a CR-type zinc-finger fold. Residues C155, C158, C172, C175, C194, C197, C208, and C211 each contribute to the Zn(2+) site. 4 CXXCXGXG motif repeats span residues 155 to 162 (CSACEGTG), 172 to 179 (CPTCSGMG), 194 to 201 (CPTCSGMG), and 208 to 215 (CQACRGAG).

This sequence belongs to the DnaJ family. In terms of assembly, homodimer. Zn(2+) is required as a cofactor.

It is found in the cytoplasm. Functionally, participates actively in the response to hyperosmotic and heat shock by preventing the aggregation of stress-denatured proteins and by disaggregating proteins, also in an autonomous, DnaK-independent fashion. Unfolded proteins bind initially to DnaJ; upon interaction with the DnaJ-bound protein, DnaK hydrolyzes its bound ATP, resulting in the formation of a stable complex. GrpE releases ADP from DnaK; ATP binding to DnaK triggers the release of the substrate protein, thus completing the reaction cycle. Several rounds of ATP-dependent interactions between DnaJ, DnaK and GrpE are required for fully efficient folding. Also involved, together with DnaK and GrpE, in the DNA replication of plasmids through activation of initiation proteins. This is Chaperone protein DnaJ from Dinoroseobacter shibae (strain DSM 16493 / NCIMB 14021 / DFL 12).